A 66-amino-acid polypeptide reads, in one-letter code: Large ribosomal subunit protein bL35 (66 aa).

The span at 1 to 16 shows a compositional bias: basic residues; sequence MPKMKTHKGSAKRFKK. Residues 1–24 form a disordered region; the sequence is MPKMKTHKGSAKRFKKTGTGQLKR.

It belongs to the bacterial ribosomal protein bL35 family.

This is Large ribosomal subunit protein bL35 from Anoxybacillus flavithermus (strain DSM 21510 / WK1).